The chain runs to 384 residues: MVANMRKKLESYLINLIKSGPRSICDKIVLFILSILEKIYNLLILLRRLLYNLNLVKPGEVEARVISVGNITAGGTGKTPLVIYLAKKLAEENRVVVISRGYQSQSEGEEPSVVSDGRNILTDVSEAGDEVYMMATLLGGVPLITGSNRYKAARLASRRFNAEIIILDDGFQHWQLKRDVDIVMIDGLKPFGQGRLIPRGFLREPLSGLKRADFFVISRAHHISREKLQEIKDTLCQYNQNAVVYEATTSSVYLKELSVASLEMKSIIHKKRPLDELKGAKVIAVCGLGNPRSFYRDLEISGAEVIETLSFNDHHQYRPDDFDKIINLARQKAIDIVITTEKDAVKFSRDDIKKFIDHNINLYVLGIEISLKGTVDLAQVINKY.

72-79 (TAGGTGKT) is a binding site for ATP.

It belongs to the LpxK family.

It carries out the reaction a lipid A disaccharide + ATP = a lipid IVA + ADP + H(+). It participates in glycolipid biosynthesis; lipid IV(A) biosynthesis; lipid IV(A) from (3R)-3-hydroxytetradecanoyl-[acyl-carrier-protein] and UDP-N-acetyl-alpha-D-glucosamine: step 6/6. Transfers the gamma-phosphate of ATP to the 4'-position of a tetraacyldisaccharide 1-phosphate intermediate (termed DS-1-P) to form tetraacyldisaccharide 1,4'-bis-phosphate (lipid IVA). In Halothermothrix orenii (strain H 168 / OCM 544 / DSM 9562), this protein is Tetraacyldisaccharide 4'-kinase.